Here is a 492-residue protein sequence, read N- to C-terminus: Glycogen synthase 1 (492 aa).

Residue K15 participates in ADP-alpha-D-glucose binding.

The protein belongs to the glycosyltransferase 1 family. Bacterial/plant glycogen synthase subfamily.

It catalyses the reaction [(1-&gt;4)-alpha-D-glucosyl](n) + ADP-alpha-D-glucose = [(1-&gt;4)-alpha-D-glucosyl](n+1) + ADP + H(+). It functions in the pathway glycan biosynthesis; glycogen biosynthesis. Its function is as follows. Synthesizes alpha-1,4-glucan chains using ADP-glucose. The sequence is that of Glycogen synthase 1 from Trichormus variabilis (strain ATCC 29413 / PCC 7937) (Anabaena variabilis).